The following is a 965-amino-acid chain: FKBP12-associated protein 1 (965 aa).

The RING-type; degenerate zinc-finger motif lies at 68 to 118 (CMICTVEMDYTCQMFACKRCYRVFDYGCIREWALKSTEKTVDRIWKCPNCY). 5 consecutive NF-X1-type zinc fingers follow at residues 159–177 (CMHG…ECTR), 216–235 (CSIH…PCPE), 362–382 (CGKH…PCLQ), 468–487 (CGIH…PCLE), and 586–606 (CYHT…VCKQ). Residues 733–796 (ERWCSQIEAI…MRSVFIKKED (64 aa)) form the R3H domain. At Thr951 the chain carries Phosphothreonine. Ser958 bears the Phosphoserine mark.

It belongs to the NFX1 family. As to quaternary structure, interacts with FPR1.

Its subcellular location is the cytoplasm. The protein localises to the nucleus. May play a role in transcription regulation. The sequence is that of FKBP12-associated protein 1 (FAP1) from Saccharomyces cerevisiae (strain ATCC 204508 / S288c) (Baker's yeast).